A 141-amino-acid polypeptide reads, in one-letter code: Nucleoside diphosphate kinase (141 aa).

6 residues coordinate ATP: Lys11, Phe59, Arg87, Thr93, Arg104, and Asn114. The active-site Pros-phosphohistidine intermediate is the His117.

Belongs to the NDK family. In terms of assembly, homotetramer. Requires Mg(2+) as cofactor.

The protein localises to the cytoplasm. It catalyses the reaction a 2'-deoxyribonucleoside 5'-diphosphate + ATP = a 2'-deoxyribonucleoside 5'-triphosphate + ADP. The catalysed reaction is a ribonucleoside 5'-diphosphate + ATP = a ribonucleoside 5'-triphosphate + ADP. Functionally, major role in the synthesis of nucleoside triphosphates other than ATP. The ATP gamma phosphate is transferred to the NDP beta phosphate via a ping-pong mechanism, using a phosphorylated active-site intermediate. This Histophilus somni (strain 2336) (Haemophilus somnus) protein is Nucleoside diphosphate kinase.